Reading from the N-terminus, the 413-residue chain is MSEKKHSCEEKSLQLYPLSNKIRHVNPNISALPSETDISESLTNDLTKLEISNYAPFNRDLETFSDLIFGLTNIQKKSLYSLQLGRSRGYALYSDENEKYLWSINTKITSTEQREVLLVKSNNKKFDTSIVLKHTHLSSKSQNEKKARVKVFRQEIWALKTLSHPCVVQLLNYYVSSAELILVENYCMGGDLYHYTKKHHSDFSLEFVGRIFSELVHTVAYLHSKCLIHRDLKLENILLTQPYNVIKTIDNWKNYPNALIQISDFELSIFVDSKNHLVQSSCGSQEYAPPEVYMGIAHDGFRADAWSLGIVLFALLEGRLPFDSYPTLDPENVRIKRYVQRLVRCDYTWHLCKSPFKRSTGNTNDNDDPSWRFRLFVKKLLKNRDQRSTPTELLKDFNKHGNFTLPLLENVTI.

A Protein kinase domain is found at 102–403; the sequence is WSINTKITST…LKDFNKHGNF (302 aa). ATP contacts are provided by residues 108–116 and Lys-133; that span reads ITSTEQREV. Catalysis depends on Asp-231, which acts as the Proton acceptor.

It belongs to the protein kinase superfamily. Ser/Thr protein kinase family.

The protein localises to the cytoplasm. It catalyses the reaction L-seryl-[protein] + ATP = O-phospho-L-seryl-[protein] + ADP + H(+). The enzyme catalyses L-threonyl-[protein] + ATP = O-phospho-L-threonyl-[protein] + ADP + H(+). This chain is Serine/threonine-protein kinase ppk27 (ppk27), found in Schizosaccharomyces pombe (strain 972 / ATCC 24843) (Fission yeast).